We begin with the raw amino-acid sequence, 462 residues long: NAD-capped RNA hydrolase NUDT12 (462 aa).

ANK repeat units follow at residues 11 to 40 (EIVT…SLLN), 45 to 74 (NGWT…DRSI), and 78 to 98 (SRQT…ANLL). At Lys-185 the chain carries N6-succinyllysine. The Zn(2+) site is built by Cys-284 and Cys-287. Lys-292 is modified (N6-succinyllysine). The Zn(2+) site is built by Cys-302 and Cys-307. Residues Tyr-318, 354–356 (AGF), Glu-370, Glu-374, and Glu-415 each bind substrate. The region spanning 319-453 (PRVDPVVIMQ…SRAIAHQLIK (135 aa)) is the Nudix hydrolase domain. Residues Ala-354, Glu-370, Glu-374, and Glu-415 each contribute to the Mg(2+) site. The Nudix box signature appears at 355–376 (GFIEPGETIEDAVRREVEEESG). The Microbody targeting signal motif lies at 460–462 (PNL).

This sequence belongs to the Nudix hydrolase family. NudC subfamily. Homodimer. Homodimerization is essential for its catalytic activity and protein stability. Interacts (via ANK repeats) with BLMH. Mg(2+) serves as cofactor. The cofactor is Zn(2+).

Its subcellular location is the cytoplasm. The protein localises to the peroxisome. It is found in the cytoplasmic granule. The enzyme catalyses a 5'-end NAD(+)-phospho-ribonucleoside in mRNA + H2O = a 5'-end phospho-adenosine-phospho-ribonucleoside in mRNA + beta-nicotinamide D-ribonucleotide + 2 H(+). It carries out the reaction NAD(+) + H2O = beta-nicotinamide D-ribonucleotide + AMP + 2 H(+). It catalyses the reaction NADH + H2O = reduced beta-nicotinamide D-ribonucleotide + AMP + 2 H(+). The catalysed reaction is NADPH + H2O = reduced beta-nicotinamide D-ribonucleotide + adenosine 2',5'-bisphosphate + 2 H(+). In terms of biological role, mRNA decapping enzyme that specifically removes the nicotinamide adenine dinucleotide (NAD) cap from a subset of mRNAs by hydrolyzing the diphosphate linkage to produce nicotinamide mononucleotide (NMN) and 5' monophosphate mRNA. The NAD-cap is present at the 5'-end of some RNAs; in contrast to the canonical N7 methylguanosine (m7G) cap, the NAD cap promotes mRNA decay. Preferentially acts on NAD-capped transcripts in response to nutrient stress. Also acts on free nicotinamide adenine dinucleotide molecules: hydrolyzes NAD(H) into NMN(H) and AMP, and NADPH into NMNH and 2',5'-ADP. May act to regulate the concentration of peroxisomal nicotinamide nucleotide cofactors required for oxidative metabolism in this organelle. Regulates the levels of circadian clock components PER1, PER2, PER3 and CRY2 in the liver. The sequence is that of NAD-capped RNA hydrolase NUDT12 from Homo sapiens (Human).